We begin with the raw amino-acid sequence, 312 residues long: Glyceraldehyde-3-phosphate dehydrogenase, cytosolic (312 aa).

NAD(+) is bound by residues 5–6 and aspartate 27; that span reads RI. D-glyceraldehyde 3-phosphate-binding positions include 144-146, threonine 175, 204-205, and arginine 227; these read SCT and TG. Cysteine 145 serves as the catalytic Nucleophile. Asparagine 309 lines the NAD(+) pocket.

The protein belongs to the glyceraldehyde-3-phosphate dehydrogenase family. As to quaternary structure, homotetramer.

It localises to the cytoplasm. It carries out the reaction D-glyceraldehyde 3-phosphate + phosphate + NAD(+) = (2R)-3-phospho-glyceroyl phosphate + NADH + H(+). The protein operates within carbohydrate degradation; glycolysis; pyruvate from D-glyceraldehyde 3-phosphate: step 1/5. Its function is as follows. Key enzyme in glycolysis that catalyzes the first step of the pathway by converting D-glyceraldehyde 3-phosphate (G3P) into 3-phospho-D-glyceroyl phosphate. Essential for the maintenance of cellular ATP levels and carbohydrate metabolism. This chain is Glyceraldehyde-3-phosphate dehydrogenase, cytosolic (GapC), found in Scenedesmus vacuolatus (Green alga).